Here is a 119-residue protein sequence, read N- to C-terminus: uncharacterized protein (119 aa).

The chain crosses the membrane as a helical span at residues 80 to 104 (VFPLVYLFCVVFQFLSLGCYLSIFF).

It localises to the membrane. This is an uncharacterized protein from Saccharomyces cerevisiae (strain ATCC 204508 / S288c) (Baker's yeast).